A 189-amino-acid polypeptide reads, in one-letter code: Ribosome maturation factor RimM (189 aa).

The region spanning 113–189 (DGEYYWVDLL…TIVADWQPDY (77 aa)) is the PRC barrel domain.

Belongs to the RimM family. In terms of assembly, binds ribosomal protein uS19.

Its subcellular location is the cytoplasm. Functionally, an accessory protein needed during the final step in the assembly of 30S ribosomal subunit, possibly for assembly of the head region. Essential for efficient processing of 16S rRNA. May be needed both before and after RbfA during the maturation of 16S rRNA. It has affinity for free ribosomal 30S subunits but not for 70S ribosomes. The polypeptide is Ribosome maturation factor RimM (Delftia acidovorans (strain DSM 14801 / SPH-1)).